A 919-amino-acid polypeptide reads, in one-letter code: Calcium-activated chloride channel regulator 4 (919 aa).

The N-terminal stretch at 1-21 is a signal peptide; sequence MGLFRGFVFLLVLCLLHQSNT. The tract at residues 45–199 is metalloprotease domain; that stretch reads DEKIIEQIED…GISGRNRVYK (155 aa). N-linked (GlcNAc...) asparagine glycosylation is present at Asn-75. His-155 is a Zn(2+) binding site. Glu-156 is a catalytic residue. Zn(2+)-binding residues include His-159 and Asp-166. The 171-residue stretch at 306 to 476 folds into the VWFA domain; that stretch reads IVCLVLDKSG…NGLIDAFGAL (171 aa). Residues Asn-340, Asn-504, Asn-542, Asn-588, Asn-628, Asn-811, Asn-832, Asn-837, and Asn-852 are each glycosylated (N-linked (GlcNAc...) asparagine). Residues 870-893 are disordered; the sequence is ANPDDIDPTPTPTPTPTPDKSHNS. The helical transmembrane segment at 895–915 threads the bilayer; sequence VNISTLVLSVIGSVVIVNFIL.

Belongs to the CLCR family. The translation product is autoproteolytically cleaved by the metalloprotease domain in the endoplasmic reticulum into a N-terminal and a C-terminal products that remain physically associated with each other. The cleavage is necessary for calcium-activated chloride channel (CaCC) activation activity. In terms of tissue distribution, primarily expressed in the digestive tract, mainly in colon. Detected in smaller amounts in brain, urogenital organs, testis, and salivary and mammary glands. Highly expressed in the epithelial layer and submucosal gland of the inferior turbinate mucosa. Lower levels in the epithelial layer of nasal polyp.

The protein localises to the cell membrane. The protein resides in the apical cell membrane. It is found in the secreted. Its function is as follows. May be involved in mediating calcium-activated chloride conductance. In Homo sapiens (Human), this protein is Calcium-activated chloride channel regulator 4 (CLCA4).